Reading from the N-terminus, the 877-residue chain is Leucine--tRNA ligase (877 aa).

The short motif at 48 to 58 is the 'HIGH' region element; the sequence is PYPSGKLHMGH. A 'KMSKS' region motif is present at residues 636-640; it reads KMSKS. Lysine 639 contacts ATP.

This sequence belongs to the class-I aminoacyl-tRNA synthetase family.

Its subcellular location is the cytoplasm. The enzyme catalyses tRNA(Leu) + L-leucine + ATP = L-leucyl-tRNA(Leu) + AMP + diphosphate. The sequence is that of Leucine--tRNA ligase from Ralstonia nicotianae (strain ATCC BAA-1114 / GMI1000) (Ralstonia solanacearum).